The following is a 60-amino-acid chain: uncharacterized protein (60 aa).

A helical transmembrane segment spans residues 14-34; it reads MLFLGTIGLAVVVGGLMAYGY. Residues 38–60 form a disordered region; the sequence is GKTPSSGTSFHTASPSFSSRYRY. Residues 40-60 show a composition bias toward polar residues; sequence TPSSGTSFHTASPSFSSRYRY.

It is found in the host membrane. This is an uncharacterized protein from Dryophytes versicolor (chameleon treefrog).